Here is a 501-residue protein sequence, read N- to C-terminus: Arabinose import ATP-binding protein AraG (501 aa).

2 consecutive ABC transporter domains span residues 4–239 (LEFN…MVGR) and 252–495 (LGDN…LPDK). An ATP-binding site is contributed by 36 to 43 (GENGAGKS).

It belongs to the ABC transporter superfamily. Arabinose importer (TC 3.A.1.2.2) family. As to quaternary structure, the complex is composed of two ATP-binding proteins (AraG), two transmembrane proteins (AraH) and a solute-binding protein (AraF).

The protein resides in the cell inner membrane. It catalyses the reaction L-arabinose(out) + ATP + H2O = L-arabinose(in) + ADP + phosphate + H(+). Part of the ABC transporter complex AraFGH involved in arabinose import. Responsible for energy coupling to the transport system. The chain is Arabinose import ATP-binding protein AraG from Rhizobium etli (strain ATCC 51251 / DSM 11541 / JCM 21823 / NBRC 15573 / CFN 42).